The primary structure comprises 180 residues: Large ribosomal subunit protein uL5 (180 aa).

Belongs to the universal ribosomal protein uL5 family. In terms of assembly, part of the 50S ribosomal subunit; part of the 5S rRNA/L5/L18/L25 subcomplex. Contacts the 5S rRNA and the P site tRNA. Forms a bridge to the 30S subunit in the 70S ribosome.

In terms of biological role, this is one of the proteins that bind and probably mediate the attachment of the 5S RNA into the large ribosomal subunit, where it forms part of the central protuberance. In the 70S ribosome it contacts protein S13 of the 30S subunit (bridge B1b), connecting the 2 subunits; this bridge is implicated in subunit movement. Contacts the P site tRNA; the 5S rRNA and some of its associated proteins might help stabilize positioning of ribosome-bound tRNAs. This chain is Large ribosomal subunit protein uL5, found in Clostridium botulinum (strain ATCC 19397 / Type A).